Reading from the N-terminus, the 405-residue chain is Probable tRNA sulfurtransferase (405 aa).

Residues 60-165 (DAVINRLKKV…SNGIFLTSEV (106 aa)) form the THUMP domain. Residues 183–184 (ML), 208–209 (HF), R265, G287, and Q296 each bind ATP.

This sequence belongs to the ThiI family.

It is found in the cytoplasm. The enzyme catalyses [ThiI sulfur-carrier protein]-S-sulfanyl-L-cysteine + a uridine in tRNA + 2 reduced [2Fe-2S]-[ferredoxin] + ATP + H(+) = [ThiI sulfur-carrier protein]-L-cysteine + a 4-thiouridine in tRNA + 2 oxidized [2Fe-2S]-[ferredoxin] + AMP + diphosphate. The catalysed reaction is [ThiS sulfur-carrier protein]-C-terminal Gly-Gly-AMP + S-sulfanyl-L-cysteinyl-[cysteine desulfurase] + AH2 = [ThiS sulfur-carrier protein]-C-terminal-Gly-aminoethanethioate + L-cysteinyl-[cysteine desulfurase] + A + AMP + 2 H(+). It participates in cofactor biosynthesis; thiamine diphosphate biosynthesis. Its function is as follows. Catalyzes the ATP-dependent transfer of a sulfur to tRNA to produce 4-thiouridine in position 8 of tRNAs, which functions as a near-UV photosensor. Also catalyzes the transfer of sulfur to the sulfur carrier protein ThiS, forming ThiS-thiocarboxylate. This is a step in the synthesis of thiazole, in the thiamine biosynthesis pathway. The sulfur is donated as persulfide by IscS. The chain is Probable tRNA sulfurtransferase from Pediococcus pentosaceus (strain ATCC 25745 / CCUG 21536 / LMG 10740 / 183-1w).